We begin with the raw amino-acid sequence, 511 residues long: UDP-N-acetylhexosamine pyrophosphorylase-like protein 1 (511 aa).

A compositionally biased stretch (basic and acidic residues) spans 1 to 19; it reads MDRSESAESAESRRRRAEE. A disordered region spans residues 1–22; that stretch reads MDRSESAESAESRRRRAEESGQ. The short motif at 117-120 is the Substrate binding element; it reads LAGG. Residues 117–120, Lys131, Gln205, and Gly231 contribute to the UTP site; that span reads LAGG. A substrate-binding site is contributed by Asn232. Asp262 contacts UTP. The Substrate binding signature appears at 312-313; it reads EY. Lys386 lines the UTP pocket. Lys416 contacts substrate.

Belongs to the UDPGP type 1 family.

This is UDP-N-acetylhexosamine pyrophosphorylase-like protein 1 (uap1l1) from Xenopus tropicalis (Western clawed frog).